A 405-amino-acid polypeptide reads, in one-letter code: Tryptophan synthase beta chain (405 aa).

Lysine 98 carries the N6-(pyridoxal phosphate)lysine modification.

It belongs to the TrpB family. As to quaternary structure, tetramer of two alpha and two beta chains. Pyridoxal 5'-phosphate serves as cofactor.

It carries out the reaction (1S,2R)-1-C-(indol-3-yl)glycerol 3-phosphate + L-serine = D-glyceraldehyde 3-phosphate + L-tryptophan + H2O. Its pathway is amino-acid biosynthesis; L-tryptophan biosynthesis; L-tryptophan from chorismate: step 5/5. Its function is as follows. The beta subunit is responsible for the synthesis of L-tryptophan from indole and L-serine. In Stenotrophomonas maltophilia (strain R551-3), this protein is Tryptophan synthase beta chain.